We begin with the raw amino-acid sequence, 262 residues long: Kallikrein-1 (262 aa).

An N-terminal signal peptide occupies residues 1 to 18 (MWFLVLCLALSLGGTGAA). The propeptide at 19-24 (PPIQSR) is activation peptide. Residues 25-259 (IVGGWECEQH…YVKWIEDTIA (235 aa)) form the Peptidase S1 domain. 5 cysteine pairs are disulfide-bonded: Cys-31/Cys-174, Cys-50/Cys-66, Cys-153/Cys-220, Cys-185/Cys-199, and Cys-210/Cys-235. The active-site Charge relay system is the His-65. O-linked (GalNAc...) serine glycosylation is present at Ser-93. Residue Asn-102 is glycosylated (N-linked (GlcNAc...) asparagine). An O-linked (GalNAc...) serine glycan is attached at Ser-104. Asn-108 carries N-linked (GlcNAc...) asparagine glycosylation. The active-site Charge relay system is the Asp-120. N-linked (GlcNAc...) asparagine; partial glycosylation occurs at Asn-165. A glycan (O-linked (GalNAc...) serine) is linked at Ser-167. Ser-214 (charge relay system) is an active-site residue.

The protein belongs to the peptidase S1 family. Kallikrein subfamily. The O-linked polysaccharides on Ser-93, Ser-104 and Ser-167 are probably the mucin type linked to GalNAc. In PubMed:3163150, GalNAc was detected with the corresponding peptides but not located. In terms of tissue distribution, isoform 2 is expressed in pancreas, salivary glands, kidney, colon, prostate gland, testis, spleen and the colon adenocarcinoma cell line T84.

It carries out the reaction Preferential cleavage of Arg-|-Xaa bonds in small molecule substrates. Highly selective action to release kallidin (lysyl-bradykinin) from kininogen involves hydrolysis of Met-|-Xaa or Leu-|-Xaa.. In terms of biological role, glandular kallikreins cleave Met-Lys and Arg-Ser bonds in kininogen to release Lys-bradykinin. Its function is as follows. (Microbial infection) Cleaves Neisseria meningitidis NHBA in saliva; Neisseria is an obligate commensal of the nasopharyngeal mucosa. The protein is Kallikrein-1 (KLK1) of Homo sapiens (Human).